The following is a 209-amino-acid chain: MICOS complex subunit mic19 (209 aa).

2 coiled-coil regions span residues 48-86 and 127-156; these read LELE…DTGS and EVAA…GRKK.

It belongs to the MICOS complex subunit Mic19 family. As to quaternary structure, component of the mitochondrial contact site and cristae organizing system (MICOS) complex.

The protein localises to the mitochondrion inner membrane. Component of the MICOS complex, a large protein complex of the mitochondrial inner membrane that plays crucial roles in the maintenance of crista junctions, inner membrane architecture, and formation of contact sites to the outer membrane. Involved in osmoadaptation. The polypeptide is MICOS complex subunit mic19 (Emericella nidulans (strain FGSC A4 / ATCC 38163 / CBS 112.46 / NRRL 194 / M139) (Aspergillus nidulans)).